The sequence spans 181 residues: MVASGIPALSLFLLMQGSVDGNGIQGFFYPWSCEGDVWDRESCGGQAAIENPNLCLRLRCCYRDGVCYHQRPDETMRRKHMWALGWTCGGLLFLISSICLFWWAKRRDMLHLPGFLKGKCDLSRTVSLLSKDRGTLSDKKTSAGSVPTSLPTEGNADVSGATEGEGTTEGGEETEGGEDED.

The N-terminal stretch at 1–21 (MVASGIPALSLFLLMQGSVDG) is a signal peptide. The Extracellular segment spans residues 22–81 (NGIQGFFYPWSCEGDVWDRESCGGQAAIENPNLCLRLRCCYRDGVCYHQRPDETMRRKHM). The P-type domain occupies 31–71 (WSCEGDVWDRESCGGQAAIENPNLCLRLRCCYRDGVCYHQR). Cystine bridges form between C33–C61, C43–C60, and C55–C67. A helical transmembrane segment spans residues 82 to 102 (WALGWTCGGLLFLISSICLFW). The Cytoplasmic portion of the chain corresponds to 103–181 (WAKRRDMLHL…EETEGGEDED (79 aa)). The disordered stretch occupies residues 135 to 181 (TLSDKKTSAGSVPTSLPTEGNADVSGATEGEGTTEGGEETEGGEDED). Positions 142-152 (SAGSVPTSLPT) are enriched in polar residues. Over residues 170–181 (GGEETEGGEDED) the composition is skewed to acidic residues.

Its subcellular location is the membrane. The polypeptide is Transmembrane protein 190 (TMEM190) (Canis lupus familiaris (Dog)).